Consider the following 37-residue polypeptide: Photosystem II reaction center protein T (37 aa).

The helical transmembrane segment at 3–23 threads the bilayer; sequence ALVYTFLLVSTLGIIFFAIFF.

The protein belongs to the PsbT family. As to quaternary structure, PSII is composed of 1 copy each of membrane proteins PsbA, PsbB, PsbC, PsbD, PsbE, PsbF, PsbH, PsbI, PsbJ, PsbK, PsbL, PsbM, PsbT, PsbY, PsbZ, Psb30/Ycf12, at least 3 peripheral proteins of the oxygen-evolving complex and a large number of cofactors. It forms dimeric complexes.

The protein localises to the plastid. It is found in the chloroplast thylakoid membrane. Its function is as follows. Found at the monomer-monomer interface of the photosystem II (PS II) dimer, plays a role in assembly and dimerization of PSII. PSII is a light-driven water plastoquinone oxidoreductase, using light energy to abstract electrons from H(2)O, generating a proton gradient subsequently used for ATP formation. The protein is Photosystem II reaction center protein T of Cucumis sativus (Cucumber).